A 1187-amino-acid polypeptide reads, in one-letter code: BAI1-associated protein 3 (1187 aa).

The segment at 55-81 is disordered; that stretch reads SFRRRTEQDPGSASADPQEPATGAWKP. Residues 176 to 335 enclose the C2 1 domain; that stretch reads SLEEHTEAIE…VKSARANGTA (160 aa). Ca(2+) contacts are provided by Asp211, Asp217, Asp295, and Asp297. The MHD1 domain occupies 663 to 784; it reads FELYLTLADL…EATLFYTELL (122 aa). One can recognise an MHD2 domain in the interval 888–996; it reads DEAVAPLMKY…CSTRECIEQF (109 aa). The 127-residue stretch at 1010 to 1136 folds into the C2 2 domain; it reads RFGRLSVRCH…GVARPQVGGG (127 aa). 7 residues coordinate Ca(2+): Leu1040, Asp1041, Asp1047, Asp1105, Asp1107, Ser1110, and Asp1113.

The protein belongs to the unc-13 family. Interacts with ADGRB1; this interaction is direct. Interacts with endosomal SNARE proteins VAMP3, VAMP4, STX6 and STX16; this interaction is increased in the presence of calcium. The cofactor is Ca(2+). As to expression, predominantly expressed in brain. Also expressed in nonneural tissues such as breast and testes epithelium.

The protein resides in the cytoplasm. The protein localises to the cytosol. Its subcellular location is the recycling endosome membrane. It localises to the late endosome membrane. It is found in the golgi apparatus. The protein resides in the trans-Golgi network membrane. The protein localises to the cell membrane. Its function is as follows. Functions in endosome to Golgi retrograde transport. In response to calcium influx, may interact with SNARE fusion receptors and membrane phospholipids to mediate endosome fusion with the trans-Golgi network. By promoting the recycling of secretory vesicle transmembrane proteins, it indirectly controls dense-core secretory vesicle biogenesis, maturation and their ability to mediate the constitutive and regulated secretion of neurotransmitters and hormones. May regulate behavior and food intake by controlling calcium-stimulated exocytosis of neurotransmitters including NPY and serotonin and hormones like insulin. Proposed to play a role in hypothalamic neuronal firing by modulating gamma-aminobutyric acid (GABA)ergic inhibitory neurotransmission. The chain is BAI1-associated protein 3 from Homo sapiens (Human).